Reading from the N-terminus, the 792-residue chain is Probable G-protein coupled receptor 156 (792 aa).

Topologically, residues methionine 1–leucine 49 are extracellular. A glycan (N-linked (GlcNAc...) asparagine) is linked at asparagine 6. Residues leucine 50 to phenylalanine 70 form a helical membrane-spanning segment. The Cytoplasmic portion of the chain corresponds to threonine 71–asparagine 86. A helical transmembrane segment spans residues leucine 87–isoleucine 107. Over glutamine 108–alanine 118 the chain is Extracellular. A helical transmembrane segment spans residues leucine 119 to leucine 139. The Cytoplasmic segment spans residues glycine 140–glutamine 164. The chain crosses the membrane as a helical span at residues leucine 165–leucine 185. Residues threonine 186–aspartate 222 are Extracellular-facing. The helical transmembrane segment at valine 223–alanine 243 threads the bilayer. The Cytoplasmic portion of the chain corresponds to glycine 244–serine 257. Residues leucine 258–threonine 278 traverse the membrane as a helical segment. The Extracellular segment spans residues arginine 279 to leucine 287. Residues valine 288–phenylalanine 308 traverse the membrane as a helical segment. Residues leucine 309–valine 792 are Cytoplasmic-facing. The stretch at glutamate 354–glutamate 390 forms a coiled coil. 3 disordered regions span residues glycine 407–methionine 457, glycine 469–proline 516, and aspartate 538–proline 704. A compositionally biased stretch (low complexity) spans alanine 422–serine 434. Basic and acidic residues-rich tracts occupy residues serine 443–methionine 457 and proline 474–asparagine 486. Over residues proline 554–serine 567 the composition is skewed to polar residues. A compositionally biased stretch (basic residues) spans valine 578–serine 589. Over residues glutamine 602 to arginine 619 the composition is skewed to polar residues. The segment covering aspartate 620–arginine 635 has biased composition (basic and acidic residues). Positions proline 675 to proline 704 are enriched in low complexity.

Belongs to the G-protein coupled receptor 3 family. GABA-B receptor subfamily. Widely expressed throughout the brain and is particularly dense in the olfactory tubercles, islands of Calleja, nucleus accumbens, piriform cortex and all fields of the hippocampus.

The protein localises to the cell membrane. Orphan G-protein coupled receptor involved in the regulation of hair cell orientation in mechanosensory organs of the inner ear. It is required to trigger a 180 degree reversal in hair cell orientation, creating a virtual line of polarity reversal (LPR) across which stereociliary bundles are arranged in opposite orientations. This Rattus norvegicus (Rat) protein is Probable G-protein coupled receptor 156 (Gpr156).